The following is a 503-amino-acid chain: Probable zinc metalloprotease UREG_01421 (503 aa).

The signal sequence occupies residues 1–24 (MHSLSSALAGSTFVLLFLCLLASA). N-linked (GlcNAc...) asparagine glycosylation occurs at N105. Zn(2+) contacts are provided by H176, D196, and E232. The N-linked (GlcNAc...) asparagine glycan is linked to N247. D259 is a binding site for Zn(2+). Residues 416–503 (MPRNVRVSTR…RGVAVLPFPA (88 aa)) form the Fibronectin type-III domain. N429 is a glycosylation site (N-linked (GlcNAc...) asparagine).

This sequence belongs to the peptidase M28 family. M28B subfamily. Zn(2+) is required as a cofactor.

It is found in the secreted. The polypeptide is Probable zinc metalloprotease UREG_01421 (Uncinocarpus reesii (strain UAMH 1704)).